The chain runs to 434 residues: Tryptophan dimethylallyltransferase nptA (434 aa).

L-tryptophan is bound by residues 91-92 and Glu100; that span reads SL. Substrate is bound by residues Arg115, Lys202, and Tyr204. Position 206 (Tyr206) interacts with L-tryptophan. Residues Arg271, Lys273, Tyr275, Tyr358, Tyr423, and Tyr427 each contribute to the substrate site.

It belongs to the tryptophan dimethylallyltransferase family. Homodimer.

It carries out the reaction L-tryptophan + dimethylallyl diphosphate = 4-(3-methylbut-2-enyl)-L-tryptophan + diphosphate. It functions in the pathway secondary metabolite biosynthesis. In terms of biological role, nonribosomal peptide synthase involved in the synthesis of nidulanin A and derived compounds. Nidulanin A is a tetracyclopeptide with the sequence L-Phe-L-Kyn-L-Val-D-Val and an isoprene unit N-linked to the amino group of L-kynurenine. The NRPS nlsA is responsible of the synthesis of the cyclopeptide and the prenyltransferase nptA adds the isoprene unit on the L-kynurenine residue of nidulanin A. Further modifications lead to additional oxygenated related compounds. In Emericella nidulans (strain FGSC A4 / ATCC 38163 / CBS 112.46 / NRRL 194 / M139) (Aspergillus nidulans), this protein is Tryptophan dimethylallyltransferase nptA.